Here is a 624-residue protein sequence, read N- to C-terminus: Multicopper oxidase elcG (624 aa).

Residues 1–18 (MACNILNFLTGLLSLSST) form the signal peptide. Plastocyanin-like domains follow at residues 48 to 160 (PGRA…IERG) and 216 to 373 (CMDA…TIRI). N65 is a glycosylation site (N-linked (GlcNAc...) asparagine). Cu cation-binding residues include H96, H98, H140, and H142. N271, N296, and N464 each carry an N-linked (GlcNAc...) asparagine glycan. One can recognise a Plastocyanin-like 3 domain in the interval 474 to 603 (FLFQDPSQIE…GGMGVVILDG (130 aa)). Cu cation is bound by residues H511, H514, H516, H585, C586, H587, and H591.

This sequence belongs to the multicopper oxidase family.

Its pathway is secondary metabolite biosynthesis. Its function is as follows. Multicopper oxidase; part of the gene cluster that mediates the biosynthesis of elsinochrome C, a perelyenequinone phytotoxin structurally similar to cercosporin. The first step of elsinochrome C biosynthesis is performed by the polyketide synthase elcA which catalyzes the formation of nor-toralactone. The starter unit acyltransferase (SAT) domain of elcA initiates polyketide extension by the selective utilization of acetyl-CoA, which is elongated to the heptaketide in the beta-ketoacyl synthase (KS) domain by successive condensations with six malonyl units introduced by the malonyl acyltransferase (MAT) domain. The product template (PT) domain catalyzes C4-C9 and C2-C11 aldol cyclizations and dehydrations to a trihydroxynaphthalene, which is thought to be delivered to the thioesterase (TE) domain for product release. The bifunctional enzyme elcB then methylates nor-toralactone to toralactone before conducting an unusual oxidative aromatic ring opening. The next step in perylenequinone biosynthesis is an O-methylation at the nascent OH-6 of the elcB product performed by the O-methyltransferase elcD. The oxidative coupling of the two monomeric naphthol units in perylenequinone biosynthesis is catalyzed by the FAD-dependent monooxygenase elcE and the multicopper oxidase elcG. ElcG might catalyze the first intermolecular coupling in a regio- and stereo-selective manner via a phenol radical coupling mechanism and the elcE could forge the second C-C bond intramolecularly via a hydride transfer mechanism. The fasciclin domain-containing protein elcF might also play a role duting this step. The last piece of the puzzle in the biosynthesis of elsinochrome C is the additional annulation by enolate coupling to afford the dihydrobenzo(ghi)perylenequinone system, catalyzed by the FAD-dependent monooxygenase elcH. The polypeptide is Multicopper oxidase elcG (Phaeosphaeria nodorum (strain SN15 / ATCC MYA-4574 / FGSC 10173) (Glume blotch fungus)).